The sequence spans 377 residues: Dihydroorotase, mitochondrial (377 aa).

Zn(2+) contacts are provided by His-44, His-46, Lys-130, His-168, and His-206. Lys-130 is subject to N6-carboxylysine. Ser-223 carries the post-translational modification Phosphoserine. A Zn(2+)-binding site is contributed by Asp-280.

This sequence belongs to the metallo-dependent hydrolases superfamily. DHOase family. Class II DHOase subfamily. Zn(2+) serves as cofactor.

The protein resides in the mitochondrion. It catalyses the reaction (S)-dihydroorotate + H2O = N-carbamoyl-L-aspartate + H(+). Its pathway is pyrimidine metabolism; UMP biosynthesis via de novo pathway; (S)-dihydroorotate from bicarbonate: step 3/3. The chain is Dihydroorotase, mitochondrial (PYR4) from Arabidopsis thaliana (Mouse-ear cress).